The chain runs to 292 residues: Glycine-rich RNA-binding protein RZ1B (292 aa).

Residues 12 to 90 (SRIFVGGLSW…KVISVNKAEP (79 aa)) enclose the RRM domain. A Phosphoserine modification is found at Ser20. The disordered stretch occupies residues 93–114 (GGEDVDQLKKGGGYSSRGKGTE). The segment at 117–132 (CFKCRRPGHWARDCPS) adopts a CCHC-type zinc-finger fold. Basic and acidic residues-rich tracts occupy residues 180–210 (DGRR…HYPF) and 220–268 (FVSD…EGRP). Residues 180–292 (DGRRDRDGGR…GGRPSSYERW (113 aa)) are disordered.

Expressed in roots, rosette and cauline leaves, stems, floral buds and flowers.

The protein localises to the nucleus. Its function is as follows. Binds RNA and DNA sequences non-specifically. May be involved in tolerance to cold stress. The sequence is that of Glycine-rich RNA-binding protein RZ1B from Arabidopsis thaliana (Mouse-ear cress).